The primary structure comprises 131 residues: Phosphoribosyl-AMP cyclohydrolase (131 aa).

Position 78 (D78) interacts with Mg(2+). Residue C79 coordinates Zn(2+). Residues D80 and D82 each contribute to the Mg(2+) site. C96 and C103 together coordinate Zn(2+).

Belongs to the PRA-CH family. Homodimer. Mg(2+) is required as a cofactor. It depends on Zn(2+) as a cofactor.

It localises to the cytoplasm. The enzyme catalyses 1-(5-phospho-beta-D-ribosyl)-5'-AMP + H2O = 1-(5-phospho-beta-D-ribosyl)-5-[(5-phospho-beta-D-ribosylamino)methylideneamino]imidazole-4-carboxamide. The protein operates within amino-acid biosynthesis; L-histidine biosynthesis; L-histidine from 5-phospho-alpha-D-ribose 1-diphosphate: step 3/9. Its function is as follows. Catalyzes the hydrolysis of the adenine ring of phosphoribosyl-AMP. This chain is Phosphoribosyl-AMP cyclohydrolase, found in Neisseria gonorrhoeae (strain ATCC 700825 / FA 1090).